The primary structure comprises 908 residues: DNA (cytosine-5)-methyltransferase 3A (908 aa).

The segment covering 1 to 13 has biased composition (polar residues); the sequence is MPSSGPGDTSISS. Disordered regions lie at residues 1–183 and 226–281; these read MPSS…PMPR and SQAS…PEYE. Over residues 14 to 37 the composition is skewed to basic and acidic residues; the sequence is LEREDDRKEGEEQEENRGKEERQE. Positions 44 to 54 are enriched in basic residues; the sequence is KVGRPGRKRKH. Residues 69–80 show a composition bias toward polar residues; that stretch reads TTKSQPTAQDSG. Ser-102 carries the phosphoserine modification. Residues 110-124 are compositionally biased toward low complexity; sequence GAPAEGEGTETPPEA. Thr-120 bears the Phosphothreonine mark. Lys-158 is covalently cross-linked (Glycyl lysine isopeptide (Lys-Gly) (interchain with G-Cter in SUMO2)). Arg-167 carries the post-translational modification Omega-N-methylarginine. The interval 195–399 is interaction with DNMT1 and DNMT3B; it reads SKRKRDEWLA…DTGKAVEVQN (205 aa). 2 positions are modified to phosphoserine: Ser-239 and Ser-251. Positions 242–256 are enriched in polar residues; that stretch reads AVQQPTDPASPTVAT. Residue Thr-257 is modified to Phosphothreonine. The PWWP domain maps to 257–315; it reads TPEPVGADAGDKNATKAADDEPEYEDGRGFGIGELVWGKLRGFSWWPGRIVSWWMTGRS. A compositionally biased stretch (basic and acidic residues) spans 265–275; that stretch reads AGDKNATKAAD. Ser-386 and Ser-389 each carry phosphoserine. A disordered region spans residues 443 to 462; it reads AYAPPPPAKKPRKSTTEKPK. Positions 478-610 constitute an ADD domain; that stretch reads EVRQKCRNIE…LQMFFANNHD (133 aa). The GATA-type; atypical zinc finger occupies 489–519; it reads ICISCGSLNVTLEHPLFIGGMCQNCKNCFLE. An interaction with the PRC2/EED-EZH2 complex region spans residues 490-582; it reads CISCGSLNVT…KEDPWNCYMC (93 aa). The PHD-type; atypical zinc-finger motif lies at 530–586; it reads QSYCTICCGGREVLMCGNNNCCRCFCVECVDLLVGPGAAQAAIKEDPWNCYMCGHKG. The region spanning 630-908 is the SAM-dependent MTase C5-type domain; the sequence is IRVLSLFDGI…APLKEYFACV (279 aa). Residues 637–641, Glu-660, and 682–684 contribute to the S-adenosyl-L-methionine site; these read DGIAT and DVR. Residue Cys-706 is part of the active site. Cys-706 is modified (S-methylcysteine; by autocatalysis). 887–889 is a binding site for S-adenosyl-L-methionine; sequence RSW.

The protein belongs to the class I-like SAM-binding methyltransferase superfamily. C5-methyltransferase family. As to quaternary structure, heterotetramer composed of 1 DNMT3A homodimer and 2 DNMT3L subunits (DNMT3L-DNMT3A-DNMT3A-DNMT3L). Interacts with DNMT1 and DNMT3B. Interacts with MPHOSPH8. Interacts with histone H3 that is not methylated at 'Lys-4' (H3K4). Binds the ZBTB18 transcriptional repressor. Interacts with SETDB1. Associates with HDAC1 through its ADD domain. Interacts with UHRF1. Interacts with the PRC2/EED-EZH2 complex. Interacts with UBC9, PIAS1 and PIAS2. Interacts with SPOCD1. Interacts with ZNF263; recruited to the SIX3 promoter along with other proteins involved in chromatin modification and transcriptional corepression where it contributes to transcriptional repression. Sumoylated; sumoylation disrupts the ability to interact with histone deacetylases (HDAC1 and HDAC2) and repress transcription. In terms of processing, auto-methylated at Cys-706: auto-methylation takes place in absence of DNA substrate and inactivates the DNA methyltransferase activity. Inactivation by auto-methylation may be used to inactivate unused DNA methyltransferases in the cell.

Its subcellular location is the nucleus. The protein localises to the chromosome. It localises to the cytoplasm. It carries out the reaction a 2'-deoxycytidine in DNA + S-adenosyl-L-methionine = a 5-methyl-2'-deoxycytidine in DNA + S-adenosyl-L-homocysteine + H(+). The catalysed reaction is L-cysteinyl-[protein] + S-adenosyl-L-methionine = S-methyl-L-cysteinyl-[protein] + S-adenosyl-L-homocysteine + H(+). With respect to regulation, activated by binding to the regulatory factor DNMT3L. Auto-methylation at Cys-706 in absence of DNA inactivates the DNA methyltransferase activity. Functionally, required for genome-wide de novo methylation and is essential for the establishment of DNA methylation patterns during development. DNA methylation is coordinated with methylation of histones. It modifies DNA in a non-processive manner and also methylates non-CpG sites. May preferentially methylate DNA linker between 2 nucleosomal cores and is inhibited by histone H1. Plays a role in paternal and maternal imprinting. Required for methylation of most imprinted loci in germ cells. Acts as a transcriptional corepressor for ZBTB18. Recruited to trimethylated 'Lys-36' of histone H3 (H3K36me3) sites. Can actively repress transcription through the recruitment of HDAC activity. Also has weak auto-methylation activity on Cys-706 in absence of DNA. The polypeptide is DNA (cytosine-5)-methyltransferase 3A (Dnmt3a) (Rattus norvegicus (Rat)).